The sequence spans 184 residues: ATP synthase subunit b (184 aa).

A helical membrane pass occupies residues 25-45 (IFPSWPIMLATLVSFTILLVV).

Belongs to the ATPase B chain family. In terms of assembly, F-type ATPases have 2 components, F(1) - the catalytic core - and F(0) - the membrane proton channel. F(1) has five subunits: alpha(3), beta(3), gamma(1), delta(1), epsilon(1). F(0) has three main subunits: a(1), b(2) and c(10-14). The alpha and beta chains form an alternating ring which encloses part of the gamma chain. F(1) is attached to F(0) by a central stalk formed by the gamma and epsilon chains, while a peripheral stalk is formed by the delta and b chains.

It is found in the cell membrane. Functionally, f(1)F(0) ATP synthase produces ATP from ADP in the presence of a proton or sodium gradient. F-type ATPases consist of two structural domains, F(1) containing the extramembraneous catalytic core and F(0) containing the membrane proton channel, linked together by a central stalk and a peripheral stalk. During catalysis, ATP synthesis in the catalytic domain of F(1) is coupled via a rotary mechanism of the central stalk subunits to proton translocation. Its function is as follows. Component of the F(0) channel, it forms part of the peripheral stalk, linking F(1) to F(0). This is ATP synthase subunit b from Mycoplasma mobile (strain ATCC 43663 / 163K / NCTC 11711) (Mesomycoplasma mobile).